Reading from the N-terminus, the 589-residue chain is Putative sphingomyelin phosphodiesterase asm-3 (589 aa).

The N-terminal stretch at 1–17 (MLLGLLVLSLAFQGTLA) is a signal peptide. In terms of domain architecture, Saposin B-type spans 18–101 (VTECEECKSI…LMKNDCGDFV (84 aa)). 3 disulfide bridges follow: C21–C97, C24–C89, and C52–C63. N-linked (GlcNAc...) asparagine glycosylation is present at N109. Residues D139 and H141 each contribute to the Zn(2+) site. 2 cysteine pairs are disulfide-bonded: C154/C159 and C160/C188. D217 serves as a coordination point for Zn(2+). N237 is a glycosylation site (N-linked (GlcNAc...) asparagine). N257 contacts Zn(2+). N-linked (GlcNAc...) asparagine glycosylation occurs at N334. Positions 364, 398, and 400 each coordinate Zn(2+). N463 carries N-linked (GlcNAc...) asparagine glycosylation. 2 cysteine pairs are disulfide-bonded: C530–C535 and C541–C553. Residues 562-589 (KPEPKKNKYSARFATSNERRRGKEECKI) form a disordered region. The span at 578-589 (NERRRGKEECKI) shows a compositional bias: basic and acidic residues.

The protein belongs to the acid sphingomyelinase family. It depends on Zn(2+) as a cofactor.

Its subcellular location is the secreted. It carries out the reaction an N-(acyl)-sphingosylphosphocholine + H2O = an N-acyl-sphingoid base + phosphocholine + H(+). The enzyme catalyses a sphingomyelin + H2O = phosphocholine + an N-acylsphing-4-enine + H(+). The catalysed reaction is an N-acyl-15-methylhexadecasphing-4-enine-1-phosphocholine + H2O = an N-acyl-15-methylhexadecasphing-4-enine + phosphocholine + H(+). It participates in lipid metabolism; sphingolipid metabolism. Its function is as follows. Converts sphingomyelin to ceramide (N-acyl-sphingoid base) and phosphocholine. C.elegans contain specific sphingoid bases, which are unique or different in structure compared to the sphingoid bases found in other animals. Two examples of these distinctive compounds are: 15-methylhexadecasphinganine and 15-methylhexadecasphing-4-enine. The protein is Putative sphingomyelin phosphodiesterase asm-3 (asm-3) of Caenorhabditis elegans.